We begin with the raw amino-acid sequence, 875 residues long: Probable ATP-dependent RNA helicase DDX10 (875 aa).

Residues 1–43 are disordered; the sequence is MGKTANSPGSGARPDPVRSFNRWKKKHSHRQNKKKQLRKQLKK. At threonine 4 the chain carries Phosphothreonine. Serine 7 is subject to Phosphoserine. A compositionally biased stretch (basic residues) spans 21–41; that stretch reads NRWKKKHSHRQNKKKQLRKQL. The Q motif motif lies at 69–97; the sequence is TRFSDFPLSKKTLKGLQEAQYRLVTEIQK. ATP contacts are provided by residues 89-91, glutamine 96, and 113-120; these read YRL and AKTGSGKT. Positions 100–274 constitute a Helicase ATP-binding domain; that stretch reads IGLALQGKDV…RLSLKNPEYV (175 aa). The DEAD box signature appears at 222–225; the sequence is DEAD. Positions 287-448 constitute a Helicase C-terminal domain; the sequence is TLEQNYIVCE…EIKINPEKLI (162 aa). Serine 539 bears the Phosphoserine mark. N6-acetyllysine is present on lysine 555. A disordered region spans residues 562 to 631; it reads GGKRLEGTEH…QFLDRDEEEE (70 aa). The segment covering 564-575 has biased composition (basic and acidic residues); sequence KRLEGTEHRQDN. Position 577 is a phosphothreonine (threonine 577). Residues 577–593 are compositionally biased toward acidic residues; that stretch reads TGNEEQEEEEDDEEEME. Positions 603–613 are enriched in polar residues; sequence QAPSLPNTSEA. Lysine 649 is covalently cross-linked (Glycyl lysine isopeptide (Lys-Gly) (interchain with G-Cter in SUMO2)). Positions 703–850 are disordered; sequence MQKSAIKDAE…HNRKKARWDT (148 aa). Basic and acidic residues predominate over residues 727 to 741; sequence ERLQEEDKFDKEEYR. Basic residues predominate over residues 742-751; sequence KKIKAKHREK. Residues 752-771 show a composition bias toward basic and acidic residues; it reads RLKEREARREANKRQAKAKD. A compositionally biased stretch (acidic residues) spans 772 to 790; sequence EEEAFLDWSDDDDDDDDGF. A Phosphoserine modification is found at serine 780. The span at 812 to 821 shows a compositional bias: basic and acidic residues; sequence MENKISDTKK. Serine 831 is subject to Phosphoserine.

The protein belongs to the DEAD box helicase family. DDX10/DBP4 subfamily. Interacts with AIM2; this interaction promotes AIM2 stability. Interacts with SCNA; this interaction causes DDX10 mislocalization to the nucleoplasm and cytoplasmic inclusions. As to expression, high in testis but widely expressed.

The protein resides in the cytoplasm. It is found in the nucleus. The protein localises to the nucleolus. It carries out the reaction ATP + H2O = ADP + phosphate + H(+). In terms of biological role, putative ATP-dependent RNA helicase that plays various role in innate immunity or inflammation. Plays a role in the enhancement of AIM2-induced inflammasome activation by interacting with AIM2 and stabilizing its protein level. Negatively regulates viral infection by promoting interferon beta production and interferon stimulated genes/ISGs expression. This is Probable ATP-dependent RNA helicase DDX10 (DDX10) from Homo sapiens (Human).